A 231-amino-acid chain; its full sequence is Probable amino-acid ABC transporter permease protein y4tG (231 aa).

The next 6 membrane-spanning stretches (helical) occupy residues 9–29 (TGNGELAFAISILPMLLMGLI), 32–52 (LQAAFLGFFVACVLGMVFAVL), 64–84 (AAVLIEFIRDTPLIAQLFFLY), 86–106 (VLPEYGIIFPAFLTGALALGI), 161–181 (YLVSIMKDVPVLSVVTIVEML), and 196–216 (VPLSMVGGIYLILTIVASALV). In terms of domain architecture, ABC transmembrane type-1 spans 28 to 217 (LITTLQAAFL…LTIVASALVR (190 aa)).

The protein belongs to the binding-protein-dependent transport system permease family. HisMQ subfamily.

The protein localises to the cell inner membrane. Functionally, probably part of the binding-protein-dependent transport system y4tEFGH for an amino acid. Probably responsible for the translocation of the substrate across the membrane. In Sinorhizobium fredii (strain NBRC 101917 / NGR234), this protein is Probable amino-acid ABC transporter permease protein y4tG.